The primary structure comprises 499 residues: Probable UTP--glucose-1-phosphate uridylyltransferase (499 aa).

Residues 108–111 (LNGG), Lys122, Gln185, and Gly214 each bind UTP. 110-111 (GG) contacts substrate. Residues His215 and 243–245 (NID) each bind substrate. The UTP site is built by Asp245 and Lys387.

The protein belongs to the UDPGP type 1 family.

The protein localises to the cytoplasm. Its subcellular location is the nucleus. The enzyme catalyses alpha-D-glucose 1-phosphate + UTP + H(+) = UDP-alpha-D-glucose + diphosphate. In terms of biological role, plays a central role as a glucosyl donor in cellular metabolic pathways. This chain is Probable UTP--glucose-1-phosphate uridylyltransferase, found in Schizosaccharomyces pombe (strain 972 / ATCC 24843) (Fission yeast).